The following is a 480-amino-acid chain: Glycogen synthase (480 aa).

Lys15 provides a ligand contact to ADP-alpha-D-glucose.

Belongs to the glycosyltransferase 1 family. Bacterial/plant glycogen synthase subfamily.

The catalysed reaction is [(1-&gt;4)-alpha-D-glucosyl](n) + ADP-alpha-D-glucose = [(1-&gt;4)-alpha-D-glucosyl](n+1) + ADP + H(+). Its pathway is glycan biosynthesis; glycogen biosynthesis. Synthesizes alpha-1,4-glucan chains using ADP-glucose. The protein is Glycogen synthase of Rhizobium leguminosarum bv. trifolii (strain WSM2304).